Consider the following 285-residue polypeptide: Phosphatidylserine decarboxylase proenzyme (285 aa).

Active-site charge relay system; for autoendoproteolytic cleavage activity residues include D89, H146, and S252. The Schiff-base intermediate with substrate; via pyruvic acid; for decarboxylase activity role is filled by S252. S252 is modified (pyruvic acid (Ser); by autocatalysis).

Belongs to the phosphatidylserine decarboxylase family. PSD-B subfamily. Prokaryotic type I sub-subfamily. In terms of assembly, heterodimer of a large membrane-associated beta subunit and a small pyruvoyl-containing alpha subunit. Pyruvate serves as cofactor. Is synthesized initially as an inactive proenzyme. Formation of the active enzyme involves a self-maturation process in which the active site pyruvoyl group is generated from an internal serine residue via an autocatalytic post-translational modification. Two non-identical subunits are generated from the proenzyme in this reaction, and the pyruvate is formed at the N-terminus of the alpha chain, which is derived from the carboxyl end of the proenzyme. The autoendoproteolytic cleavage occurs by a canonical serine protease mechanism, in which the side chain hydroxyl group of the serine supplies its oxygen atom to form the C-terminus of the beta chain, while the remainder of the serine residue undergoes an oxidative deamination to produce ammonia and the pyruvoyl prosthetic group on the alpha chain. During this reaction, the Ser that is part of the protease active site of the proenzyme becomes the pyruvoyl prosthetic group, which constitutes an essential element of the active site of the mature decarboxylase.

The protein localises to the cell membrane. It carries out the reaction a 1,2-diacyl-sn-glycero-3-phospho-L-serine + H(+) = a 1,2-diacyl-sn-glycero-3-phosphoethanolamine + CO2. Its pathway is phospholipid metabolism; phosphatidylethanolamine biosynthesis; phosphatidylethanolamine from CDP-diacylglycerol: step 2/2. Catalyzes the formation of phosphatidylethanolamine (PtdEtn) from phosphatidylserine (PtdSer). In Vibrio campbellii (strain ATCC BAA-1116), this protein is Phosphatidylserine decarboxylase proenzyme.